A 72-amino-acid polypeptide reads, in one-letter code: Translation initiation factor IF-1 (72 aa).

The region spanning 1–72 (MSKSDYIELE…TKGRITFRHK (72 aa)) is the S1-like domain.

The protein belongs to the IF-1 family. Component of the 30S ribosomal translation pre-initiation complex which assembles on the 30S ribosome in the order IF-2 and IF-3, IF-1 and N-formylmethionyl-tRNA(fMet); mRNA recruitment can occur at any time during PIC assembly.

It localises to the cytoplasm. One of the essential components for the initiation of protein synthesis. Stabilizes the binding of IF-2 and IF-3 on the 30S subunit to which N-formylmethionyl-tRNA(fMet) subsequently binds. Helps modulate mRNA selection, yielding the 30S pre-initiation complex (PIC). Upon addition of the 50S ribosomal subunit IF-1, IF-2 and IF-3 are released leaving the mature 70S translation initiation complex. The protein is Translation initiation factor IF-1 of Vesicomyosocius okutanii subsp. Calyptogena okutanii (strain HA).